Here is a 245-residue protein sequence, read N- to C-terminus: Probable ABC transporter permease protein HI_0355 (245 aa).

The next 6 helical transmembrane spans lie at 9–29 (LLIV…GSFP), 61–81 (ICLG…LLSF), 92–112 (ILVI…VLWF), 115–135 (GMAS…TAAC), 170–190 (LPAF…GAVV), and 217–237 (FAAL…IDWL). In terms of domain architecture, ABC transmembrane type-1 spans 50 to 234 (LWQHTQVTLL…SISLCLYFSI (185 aa)).

The protein belongs to the binding-protein-dependent transport system permease family. CysTW subfamily.

It is found in the cell inner membrane. In terms of biological role, probably part of a binding-protein-dependent transport system. Probably responsible for the translocation of the substrate across the membrane. In Haemophilus influenzae (strain ATCC 51907 / DSM 11121 / KW20 / Rd), this protein is Probable ABC transporter permease protein HI_0355.